Consider the following 63-residue polypeptide: Large ribosomal subunit protein bL32 (63 aa).

The disordered stretch occupies residues 1-23 (MATPKAKVSKSRRDKRRAQFTAR). Residues 7–18 (KVSKSRRDKRRA) show a composition bias toward basic residues.

It belongs to the bacterial ribosomal protein bL32 family.

In Prosthecochloris aestuarii (strain DSM 271 / SK 413), this protein is Large ribosomal subunit protein bL32.